Reading from the N-terminus, the 950-residue chain is Leucine--tRNA ligase (950 aa).

Residues 41–52 (PYPSGDGLHVGH) carry the 'HIGH' region motif. A 'KMSKS' region motif is present at residues 718-722 (KMSKS). An ATP-binding site is contributed by K721.

Belongs to the class-I aminoacyl-tRNA synthetase family.

It is found in the cytoplasm. It carries out the reaction tRNA(Leu) + L-leucine + ATP = L-leucyl-tRNA(Leu) + AMP + diphosphate. This Rhodopirellula baltica (strain DSM 10527 / NCIMB 13988 / SH1) protein is Leucine--tRNA ligase.